Reading from the N-terminus, the 259-residue chain is MILERIVTDNLPDLERRKMRLPLAKLQELVLDIPYPPIDMAMKLKGRQVRLIAEVKKASPSKGIIRPDFDPVDIAGIYARNGASAISVLTEEHHFMGSLDNLKKIRESGVASKLPLLRKDFIHDPYQVYESRLYGADAILLIVAMLSPERLQELLSLSHKLGMKCLVEVHTRSELEIALESNARIIGLNNRDLHTFKIDLTVTERLRPLIPPECIVVSESGIQTRADISRLEELGVDAVLVGEALTASVDIAAKMRKLL.

This sequence belongs to the TrpC family.

The catalysed reaction is 1-(2-carboxyphenylamino)-1-deoxy-D-ribulose 5-phosphate + H(+) = (1S,2R)-1-C-(indol-3-yl)glycerol 3-phosphate + CO2 + H2O. It participates in amino-acid biosynthesis; L-tryptophan biosynthesis; L-tryptophan from chorismate: step 4/5. The sequence is that of Indole-3-glycerol phosphate synthase from Dehalococcoides mccartyi (strain ATCC BAA-2100 / JCM 16839 / KCTC 5957 / BAV1).